Reading from the N-terminus, the 513-residue chain is Ribonuclease Y (513 aa).

Residues 6–26 (YIIIAVVIIIICVILGLYIVD) form a helical membrane-spanning segment. The 86-residue stretch at 203-288 (TVHVVNLPND…EMVEKAKKEV (86 aa)) folds into the KH domain. Residues 329–422 (VLKHSIEVSH…VQAADAISAA (94 aa)) form the HD domain.

It belongs to the RNase Y family.

Its subcellular location is the cell membrane. Functionally, endoribonuclease that initiates mRNA decay. The sequence is that of Ribonuclease Y from Clostridium botulinum (strain ATCC 19397 / Type A).